The following is a 160-amino-acid chain: Ribosomal RNA large subunit methyltransferase H (160 aa).

Residues Leu77, Gly109, and 128–133 each bind S-adenosyl-L-methionine; that span reads FGRITL.

Belongs to the RNA methyltransferase RlmH family. Homodimer.

It is found in the cytoplasm. It carries out the reaction pseudouridine(1915) in 23S rRNA + S-adenosyl-L-methionine = N(3)-methylpseudouridine(1915) in 23S rRNA + S-adenosyl-L-homocysteine + H(+). Its function is as follows. Specifically methylates the pseudouridine at position 1915 (m3Psi1915) in 23S rRNA. The polypeptide is Ribosomal RNA large subunit methyltransferase H (Oenococcus oeni (strain ATCC BAA-331 / PSU-1)).